The primary structure comprises 501 residues: Ribose import ATP-binding protein RbsA (501 aa).

ABC transporter domains follow at residues 5 to 241 and 249 to 495; these read LELK…VGRK and LNLP…VGKQ. 37 to 44 provides a ligand contact to ATP; it reads GENGAGKS.

It belongs to the ABC transporter superfamily. Ribose importer (TC 3.A.1.2.1) family. In terms of assembly, the complex is composed of an ATP-binding protein (RbsA), two transmembrane proteins (RbsC) and a solute-binding protein (RbsB).

The protein localises to the cell inner membrane. The enzyme catalyses D-ribose(out) + ATP + H2O = D-ribose(in) + ADP + phosphate + H(+). Functionally, part of the ABC transporter complex RbsABC involved in ribose import. Responsible for energy coupling to the transport system. The protein is Ribose import ATP-binding protein RbsA of Photorhabdus laumondii subsp. laumondii (strain DSM 15139 / CIP 105565 / TT01) (Photorhabdus luminescens subsp. laumondii).